A 94-amino-acid chain; its full sequence is Integration host factor subunit beta (94 aa).

Belongs to the bacterial histone-like protein family. Heterodimer of an alpha and a beta chain.

This protein is one of the two subunits of integration host factor, a specific DNA-binding protein that functions in genetic recombination as well as in transcriptional and translational control. The protein is Integration host factor subunit beta of Actinobacillus succinogenes (strain ATCC 55618 / DSM 22257 / CCUG 43843 / 130Z).